The sequence spans 56 residues: Large ribosomal subunit protein bL32 (56 aa).

The tract at residues 1-29 is disordered; the sequence is MAVQQNKPSRSKRGMRRSHDALTTSSVSV.

Belongs to the bacterial ribosomal protein bL32 family.

The chain is Large ribosomal subunit protein bL32 from Pectobacterium atrosepticum (strain SCRI 1043 / ATCC BAA-672) (Erwinia carotovora subsp. atroseptica).